A 57-amino-acid polypeptide reads, in one-letter code: uncharacterized protein (57 aa).

A signal peptide spans 1–24; sequence MYDTWFVLTAVVLFVLVLIGNVHG.

Prismatic layer of shell (at protein level).

The protein resides in the secreted. This is an uncharacterized protein from Margaritifera margaritifera (Freshwater pearl mussel).